The primary structure comprises 91 residues: Acyl carrier protein AsbD (91 aa).

The 79-residue stretch at E4–Q82 folds into the Carrier domain. S40 is subject to O-(pantetheine 4'-phosphoryl)serine.

Belongs to the acyl carrier protein (ACP) family. Activated by the transfer of a 4'-phosphopantetheine group from CoA to Ser-40.

Its pathway is siderophore biosynthesis; petrobactin biosynthesis. Its function is as follows. Involved in the biosynthesis of petrobactin, a catecholate siderophore that functions in both iron acquisition and virulence. Aryl-carrier protein that activates 3,4-dihydroxybenzoate (3,4-DHBA) prior to its incorporation into petrobactin. The polypeptide is Acyl carrier protein AsbD (Bacillus anthracis).